Consider the following 107-residue polypeptide: Large ribosomal subunit protein P2 (107 aa).

The interval Pro86–Asp107 is disordered. Positions Glu92–Met101 are enriched in acidic residues.

Belongs to the eukaryotic ribosomal protein P1/P2 family. As to quaternary structure, P1 and P2 exist as dimers at the large ribosomal subunit. In terms of processing, phosphorylated.

Plays an important role in the elongation step of protein synthesis. In Trypanosoma brucei brucei, this protein is Large ribosomal subunit protein P2.